Reading from the N-terminus, the 89-residue chain is Small ribosomal subunit protein uS19 (89 aa).

It belongs to the universal ribosomal protein uS19 family.

Functionally, protein S19 forms a complex with S13 that binds strongly to the 16S ribosomal RNA. This is Small ribosomal subunit protein uS19 from Stenotrophomonas maltophilia (strain R551-3).